The chain runs to 412 residues: Type II methyltransferase M.Sau3AI (412 aa).

The region spanning 4-402 is the SAM-dependent MTase C5-type domain; the sequence is IKVVELFAGV…NQIEKIDSIT (399 aa). C85 is an active-site residue.

Belongs to the class I-like SAM-binding methyltransferase superfamily. C5-methyltransferase family.

It catalyses the reaction a 2'-deoxycytidine in DNA + S-adenosyl-L-methionine = a 5-methyl-2'-deoxycytidine in DNA + S-adenosyl-L-homocysteine + H(+). A methylase that recognizes the double-stranded sequence 5'-GATC-3', methylates C-4 on both strands and protects the DNA from cleavage by the Sau3AI endonuclease. This Staphylococcus aureus protein is Type II methyltransferase M.Sau3AI (sau3AIM).